Reading from the N-terminus, the 107-residue chain is uncharacterized protein (107 aa).

This is an uncharacterized protein from Yersinia pseudotuberculosis serotype I (strain IP32953).